Reading from the N-terminus, the 149-residue chain is Interleukin-2 (149 aa).

Positions Met1–Ser20 are cleaved as a signal peptide. Thr23 carries O-linked (GalNAc...) threonine glycosylation. A disulfide bond links Cys78 and Cys121. N-linked (GlcNAc...) asparagine glycosylation is present at Asn106.

Belongs to the IL-2 family.

It is found in the secreted. Functionally, cytokine produced by activated CD4-positive helper T-cells and to a lesser extend activated CD8-positive T-cells and natural killer (NK) cells that plays pivotal roles in the immune response and tolerance. Binds to a receptor complex composed of either the high-affinity trimeric IL-2R (IL2RA/CD25, IL2RB/CD122 and IL2RG/CD132) or the low-affinity dimeric IL-2R (IL2RB and IL2RG). Interaction with the receptor leads to oligomerization and conformation changes in the IL-2R subunits resulting in downstream signaling starting with phosphorylation of JAK1 and JAK3. In turn, JAK1 and JAK3 phosphorylate the receptor to form a docking site leading to the phosphorylation of several substrates including STAT5. This process leads to activation of several pathways including STAT, phosphoinositide-3-kinase/PI3K and mitogen-activated protein kinase/MAPK pathways. Functions as a T-cell growth factor and can increase NK-cell cytolytic activity as well. Promotes strong proliferation of activated B-cells and subsequently immunoglobulin production. Plays a pivotal role in regulating the adaptive immune system by controlling the survival and proliferation of regulatory T-cells, which are required for the maintenance of immune tolerance. Moreover, participates in the differentiation and homeostasis of effector T-cell subsets, including Th1, Th2, Th17 as well as memory CD8-positive T-cells. This is Interleukin-2 (IL2) from Equus caballus (Horse).